Here is a 115-residue protein sequence, read N- to C-terminus: NADH-ubiquinone oxidoreductase chain 3 (115 aa).

The next 3 membrane-spanning stretches (helical) occupy residues 3 to 23 (LLII…IAFW), 55 to 75 (FFLV…LLPL), and 86 to 106 (TMMA…SYEW).

It belongs to the complex I subunit 3 family. Core subunit of respiratory chain NADH dehydrogenase (Complex I) which is composed of 45 different subunits. Interacts with TMEM186. Interacts with TMEM242.

It localises to the mitochondrion inner membrane. The catalysed reaction is a ubiquinone + NADH + 5 H(+)(in) = a ubiquinol + NAD(+) + 4 H(+)(out). In terms of biological role, core subunit of the mitochondrial membrane respiratory chain NADH dehydrogenase (Complex I) which catalyzes electron transfer from NADH through the respiratory chain, using ubiquinone as an electron acceptor. Essential for the catalytic activity of complex I. This chain is NADH-ubiquinone oxidoreductase chain 3, found in Rattus norvegicus (Rat).